A 1493-amino-acid polypeptide reads, in one-letter code: Protein RNA-directed DNA methylation 3 (1493 aa).

Disordered regions lie at residues 1-34 (MDRKGKGKQVAGSDSYSGGQKRKNSVEFRDEGLR) and 54-96 (GYYG…SSFV). A Nuclear localization signal motif is present at residues 21–28 (KRKNSVEF). Over residues 24-34 (NSVEFRDEGLR) the composition is skewed to basic and acidic residues. The segment covering 60-80 (SDEDDDGLGFLNDMEDEPEVE) has biased composition (acidic residues). Basic and acidic residues predominate over residues 81 to 92 (ESSKAGKGEKGK). The 28-residue stretch at 239-266 (KVSEGTWARVKNGKYKGDLAQIVAVSDT) folds into the KOW 1 domain. The disordered stretch occupies residues 393 to 432 (PTCREGGKGEGSGGGKGEGSGGGKGEGSRGGKGEGSSDFK). A compositionally biased stretch (gly residues) spans 401–417 (GEGSGGGKGEGSGGGKG). A compositionally biased stretch (basic and acidic residues) spans 418–432 (EGSRGGKGEGSSDFK). In terms of domain architecture, KOW 2 spans 501-528 (QISVNDVVKISKGPSEGKQGVVRQVYRG). Residues 578–602 (SSPKSPLSPEKEWQPRERYNSSNQG) form a disordered region. The segment covering 586–596 (PEKEWQPRERY) has biased composition (basic and acidic residues). Positions 607-634 (TYSIGQKLRIRVGPLKGYLCRVIALRYS) constitute a KOW 3 domain. Disordered regions lie at residues 692-711 (IGAGTSSEGGNWNIGGPSTD), 728-747 (EKNPWGGSKPTSDVSPTVAD), and 757-1493 (AAEN…KTGW). The stretch at 732–741 (WGGSKPTSDV) is repeat 1. A 42 X 9 AA approximate WG/GW-rich tandem repeats region spans residues 732 to 1493 (WGGSKPTSDV…WGTGDKKTGW (762 aa)). Over residues 757 to 767 (AAENKPASASD) the composition is skewed to low complexity. Repeat copies occupy residues 775–784 (WGKTPASEAG), 789–797 (WGDTSASNV), 818–827 (WGTHGGSSGG), 836–845 (WGKLCEASES), 854–863 (WGKKGGSDGE), 866–875 (WGNKDGNSSA), 883–892 (WGQQDKGSDE), 917–926 (GWNKSAEDSN), 935–943 (WGQPNDGSS), 944–953 (WGKKGDGAAS), 954–962 (WGKKDDGGS), 963–972 (WGKKDDGNKD), 978–987 (WGKKDDGQKD), 1003–1012 (WGKKDDGGSS), 1013–1022 (WGKKDDGGSL), 1023–1032 (WGKKDDGGSS), 1033–1042 (WGKEDDGGSL), 1043–1052 (WGKKDDGESS), 1053–1062 (WGKKDDGESS), 1063–1072 (WGKKDDGGSS), 1073–1082 (WGKKDEGGYS), 1132–1141 (WGKQDGDGGG), 1144–1153 (WGKENDAGGG), 1156–1165 (WGKQDNGVGS), 1167–1176 (WGKQNDGSGG), 1180–1189 (WGKQNDAGGG), 1192–1201 (WGKQDSGGDG), 1204–1213 (WGKQDGGGDS), 1217–1226 (WGKQNNTSGG), 1229–1238 (WGKQSDAGGG), 1241–1250 (WGKQDGGGGG), 1253–1262 (WGKQDGGGGS), 1266–1275 (WGKQNETSNG), 1278–1287 (WGKQNDSGGG), 1290–1299 (WGKQDGGGGG), 1302–1311 (WGKQNDGGGG), and 1314–1323 (WGKQGDGGSK). A compositionally biased stretch (polar residues) spans 790–812 (GDTSASNVEASSWEKQGASTSNV). The span at 846 to 860 (SQKKEESSWGKKGGS) shows a compositional bias: basic and acidic residues. The span at 866–875 (WGNKDGNSSA) shows a compositional bias: polar residues. Positions 955 to 1090 (GKKDDGGSWG…YSEQTFDRGG (136 aa)) are enriched in basic and acidic residues. Over residues 1122–1134 (PWSKPSGGSSWGK) the composition is skewed to low complexity. Residues 1156–1172 (WGKQDNGVGSSWGKQND) show a composition bias toward polar residues. The segment covering 1186–1213 (AGGGSSWGKQDSGGDGSSWGKQDGGGDS) has biased composition (gly residues). The span at 1218–1231 (GKQNNTSGGSSWGK) shows a compositional bias: polar residues. Residues 1235–1264 (AGGGSSWGKQDGGGGGSSWGKQDGGGGSGS) show a composition bias toward gly residues. Polar residues predominate over residues 1270 to 1283 (NETSNGSSWGKQND). Residues 1284–1321 (SGGGSSWGKQDGGGGGSSWGKQNDGGGGSSWGKQGDGG) are compositionally biased toward gly residues. Polar residues-rich tracts occupy residues 1366–1382 (WKTDNQENTWKSDQSGG) and 1392–1401 (DSNNSKPSGS). Copy 39 of the repeat occupies 1389–1398 (WGEDSNNSKP). Residues 1416 to 1430 (NSKKETNDKPGDDSK) show a composition bias toward basic and acidic residues. Residues 1432 to 1442 (AWGTSNDQVNT) are compositionally biased toward polar residues. Repeat copies occupy residues 1433–1442 (WGTSNDQVNT), 1467–1475 (WGGKTNAVA), and 1484–1493 (WGTGDKKTGW).

Interacts with AGO4 via its C-terminal region and with RNA transcripts. Binds chromatin at loci subject to transcriptional silencing downstream of RNA Polymerase V, but independently from the presence of 24-nt siRNA.

It is found in the nucleus. Its subcellular location is the nucleoplasm. Its function is as follows. Effector of RNA-directed DNA methylation (RdDM) triggered by small interfering RNAs (siRNAs, 24-nt RNAs). Functions as an adapter protein that binds scaffold transcripts generated by polymerase V and recruits AGO4 and AGO4-bound siRNAs to form an RdDM effector complex. Promotes the expression of 24-nt RNAs. Required for the initial establishment of DNA methylation. Together with AGO4, required for transcriptional gene silencing (TGS) by DNA methylation and repressive histone modifications (H3K9me2) of several chromatin loci. The protein is Protein RNA-directed DNA methylation 3 of Arabidopsis thaliana (Mouse-ear cress).